The following is a 66-amino-acid chain: MAKGGNVRVTITLECTSCTQDSVNKKSPGISRYTTRKNRRNTPLRLELKKFCPYCYKHTIHGEIKK.

The protein belongs to the bacterial ribosomal protein bL33 family.

It is found in the plastid. The protein resides in the chloroplast. The chain is Large ribosomal subunit protein bL33c from Cryptomeria japonica (Japanese cedar).